A 386-amino-acid chain; its full sequence is Protein phosphatase methylesterase 1 (386 aa).

The segment at 1–38 is disordered; that stretch reads MSALEKSMHLGRLPSRPPLPGSGGSQSGAKMRMGPGRK. Ser-15 is subject to Phosphoserine. Residue Arg-16 is modified to Asymmetric dimethylarginine; alternate. Arg-16 carries the post-translational modification Omega-N-methylarginine; alternate. Ser-42 carries the post-translational modification Phosphoserine. Active-site residues include Ser-156 and Asp-181. The span at 254-265 shows a compositional bias: acidic residues; the sequence is IIEEEEEDEEGS. Residues 254–280 form a disordered region; that stretch reads IIEEEEEDEEGSESISKRKKEDDMETK. Positions 268 to 280 are enriched in basic and acidic residues; that stretch reads ISKRKKEDDMETK. His-349 is an active-site residue.

The protein belongs to the AB hydrolase superfamily. Binds PPP2CA and PPP2CB. Phosphorylated by SIK1 following increases in intracellular sodium, leading to dissociation from the protein phosphatase 2A (PP2A) complex and subsequent dephosphorylation of sodium/potassium-transporting ATPase ATP1A1.

The enzyme catalyses [phosphatase 2A protein]-C-terminal L-leucine methyl ester + H2O = [phosphatase 2A protein]-C-terminal L-leucine + methanol + H(+). Demethylates proteins that have been reversibly carboxymethylated. Demethylates PPP2CB (in vitro) and PPP2CA. Binding to PPP2CA displaces the manganese ion and inactivates the enzyme. The sequence is that of Protein phosphatase methylesterase 1 (PPME1) from Homo sapiens (Human).